The primary structure comprises 216 residues: Ribose-5-phosphate isomerase A (216 aa).

Substrate contacts are provided by residues 26-29, 79-82, and 92-95; these read TGST, DGAD, and KGGG. Glutamate 101 functions as the Proton acceptor in the catalytic mechanism. Position 119 (lysine 119) interacts with substrate.

The protein belongs to the ribose 5-phosphate isomerase family. Homodimer.

The catalysed reaction is aldehydo-D-ribose 5-phosphate = D-ribulose 5-phosphate. The protein operates within carbohydrate degradation; pentose phosphate pathway; D-ribose 5-phosphate from D-ribulose 5-phosphate (non-oxidative stage): step 1/1. Catalyzes the reversible conversion of ribose-5-phosphate to ribulose 5-phosphate. This Legionella pneumophila (strain Paris) protein is Ribose-5-phosphate isomerase A.